The chain runs to 288 residues: Diaminopimelate epimerase (288 aa).

Substrate-binding residues include N14 and N67. The active-site Proton donor is C76. Substrate-binding positions include 77–78 (GN), N166, N199, and 217–218 (ER). C226 acts as the Proton acceptor in catalysis. 227–228 (GT) provides a ligand contact to substrate.

This sequence belongs to the diaminopimelate epimerase family. In terms of assembly, homodimer.

The protein localises to the cytoplasm. The catalysed reaction is (2S,6S)-2,6-diaminopimelate = meso-2,6-diaminopimelate. The protein operates within amino-acid biosynthesis; L-lysine biosynthesis via DAP pathway; DL-2,6-diaminopimelate from LL-2,6-diaminopimelate: step 1/1. In terms of biological role, catalyzes the stereoinversion of LL-2,6-diaminopimelate (L,L-DAP) to meso-diaminopimelate (meso-DAP), a precursor of L-lysine and an essential component of the bacterial peptidoglycan. The polypeptide is Diaminopimelate epimerase (Bacillus anthracis (strain A0248)).